Consider the following 478-residue polypeptide: Catalase easC (478 aa).

Histidine 54 is a catalytic residue. Tyrosine 343 provides a ligand contact to heme. Residues 459 to 478 (VAEKARPDSPSRAQPGQLRL) form a disordered region.

The protein belongs to the catalase family. The cofactor is heme.

The protein operates within alkaloid biosynthesis; ergot alkaloid biosynthesis. Its function is as follows. Catalase; part of the gene cluster that mediates the biosynthesis of fungal ergot alkaloid. DmaW catalyzes the first step of ergot alkaloid biosynthesis by condensing dimethylallyl diphosphate (DMAP) and tryptophan to form 4-dimethylallyl-L-tryptophan. The second step is catalyzed by the methyltransferase easF that methylates 4-dimethylallyl-L-tryptophan in the presence of S-adenosyl-L-methionine, resulting in the formation of 4-dimethylallyl-L-abrine. The catalase easC and the FAD-dependent oxidoreductase easE then transform 4-dimethylallyl-L-abrine to chanoclavine-I which is further oxidized by easD in the presence of NAD(+), resulting in the formation of chanoclavine-I aldehyde. Chanoclavine-I aldehyde is the precursor of ergoamides and ergopeptines in Clavicipitaceae, and clavine-type alcaloids such as fumiclavine in Trichocomaceae. However, the metabolites downstream of chanoclavine-I aldehyde in Arthrodermataceae have not been identified yet. This chain is Catalase easC, found in Trichophyton verrucosum (strain HKI 0517).